The chain runs to 149 residues: Transcription antitermination protein NusB (149 aa).

The protein belongs to the NusB family.

Its function is as follows. Involved in transcription antitermination. Required for transcription of ribosomal RNA (rRNA) genes. Binds specifically to the boxA antiterminator sequence of the ribosomal RNA (rrn) operons. This Sphingopyxis alaskensis (strain DSM 13593 / LMG 18877 / RB2256) (Sphingomonas alaskensis) protein is Transcription antitermination protein NusB.